A 106-amino-acid polypeptide reads, in one-letter code: PAT complex subunit Asterix (106 aa).

Residues methionine 1 to arginine 10 are compositionally biased toward polar residues. A disordered region spans residues methionine 1–leucine 29. Serine 2 is subject to N-acetylserine. Topologically, residues serine 2–proline 32 are cytoplasmic. Residues threonine 33–leucine 51 traverse the membrane as a helical segment. A topological domain (lumenal) is located at residue lysine 52. The helical transmembrane segment at leucine 53–asparagine 70 threads the bilayer. Residues serine 71 to serine 74 lie on the Cytoplasmic side of the membrane. A helical transmembrane segment spans residues glutamate 75–tyrosine 95. At leucine 96–tryptophan 106 the chain is on the lumenal side.

The protein belongs to the Asterix family. Component of the PAT complex, composed of WDR83OS/Asterix and CCDC47. The PAT complex is part of the multi-pass translocon (MPT) complex, composed of three subcomplexes, the GEL complex (composed of RAB5IF/OPTI and TMCO1), the BOS complex (composed of NCLN/Nicalin, NOMO1 and TMEM147) and the PAT complex (composed of WDR83OS/Asterix and CCDC47). The MPT complex associates with the SEC61 complex.

The protein localises to the endoplasmic reticulum membrane. Its function is as follows. Component of the multi-pass translocon (MPT) complex that mediates insertion of multi-pass membrane proteins into the lipid bilayer of membranes. The MPT complex takes over after the SEC61 complex: following membrane insertion of the first few transmembrane segments of proteins by the SEC61 complex, the MPT complex occludes the lateral gate of the SEC61 complex to promote insertion of subsequent transmembrane regions. Within the MPT complex, the PAT subcomplex sequesters any highly polar regions in the transmembrane domains away from the non-polar membrane environment until they can be buried in the interior of the fully assembled protein. Within the PAT subcomplex, WDR83OS/Asterix binds to and redirects the substrate to a location behind the SEC61 complex. This Sus scrofa (Pig) protein is PAT complex subunit Asterix (WDR83OS).